A 903-amino-acid chain; its full sequence is Ras and Rab interactor 2 (903 aa).

Positions 44-73 (NGLEPSETHSMVRHKDGGYSEDKDGKTCPR) are disordered. Over residues 56–73 (RHKDGGYSEDKDGKTCPR) the composition is skewed to basic and acidic residues. The region spanning 97 to 190 (WLQLSLSEEE…VLPFTLKLPY (94 aa)) is the SH2 domain. 2 disordered regions span residues 282 to 455 (QDLS…EFDR) and 471 to 491 (EDYE…SKKK). The span at 306–315 (SPPPRPPPPA) shows a compositional bias: pro residues. Positions 318–338 (SLHTSPGLSRTEPQTSMPETV) are enriched in polar residues. Ser-366 carries the phosphoserine modification. A compositionally biased stretch (pro residues) spans 419–431 (APPPGSESQPPPC). The span at 439–450 (SDMSLSTSSSDS) shows a compositional bias: low complexity. Positions 506–775 (LRKMSGVFSS…ARLLSSEARD (270 aa)) are interaction with RAB5B. Ser-510 carries the post-translational modification Phosphoserine. Thr-518 bears the Phosphothreonine mark. The VPS9 domain occupies 627–766 (DGSWKQLKEN…IKNFQEEQAA (140 aa)). In terms of domain architecture, Ras-associating spans 796–887 (FQNYLRVAFQ…FHFVYKRIKS (92 aa)).

Belongs to the RIN (Ras interaction/interference) family. In terms of assembly, homotetramer; probably composed of anti-parallel linkage of two parallel dimers. Interacts with Ras. Interacts with RAB5B, with a much higher affinity for GTP-bound activated RAB5B. Does not interact with other members of the Rab family.

It is found in the cytoplasm. Functionally, ras effector protein. May function as an upstream activator and/or downstream effector for RAB5B in endocytic pathway. May function as a guanine nucleotide exchange (GEF) of RAB5B, required for activating the RAB5 proteins by exchanging bound GDP for free GTP. The polypeptide is Ras and Rab interactor 2 (Rin2) (Mus musculus (Mouse)).